Consider the following 266-residue polypeptide: Glutamate racemase (266 aa).

Substrate contacts are provided by residues 9–10 and 41–42; these read DS and YG. Cys72 (proton donor/acceptor) is an active-site residue. 73–74 is a substrate binding site; the sequence is NT. Cys184 acts as the Proton donor/acceptor in catalysis. 185–186 provides a ligand contact to substrate; sequence TH.

This sequence belongs to the aspartate/glutamate racemases family.

It catalyses the reaction L-glutamate = D-glutamate. The protein operates within cell wall biogenesis; peptidoglycan biosynthesis. In terms of biological role, provides the (R)-glutamate required for cell wall biosynthesis. This is Glutamate racemase from Staphylococcus aureus (strain bovine RF122 / ET3-1).